The chain runs to 344 residues: Uroporphyrinogen decarboxylase (344 aa).

Residues 27-31 (RQAGR), Phe-46, Asp-77, Tyr-153, Thr-208, and His-324 each bind substrate.

Belongs to the uroporphyrinogen decarboxylase family. Homodimer.

It is found in the cytoplasm. It carries out the reaction uroporphyrinogen III + 4 H(+) = coproporphyrinogen III + 4 CO2. The protein operates within porphyrin-containing compound metabolism; protoporphyrin-IX biosynthesis; coproporphyrinogen-III from 5-aminolevulinate: step 4/4. In terms of biological role, catalyzes the decarboxylation of four acetate groups of uroporphyrinogen-III to yield coproporphyrinogen-III. This chain is Uroporphyrinogen decarboxylase, found in Bradyrhizobium diazoefficiens (strain JCM 10833 / BCRC 13528 / IAM 13628 / NBRC 14792 / USDA 110).